A 226-amino-acid chain; its full sequence is Protein BASIC PENTACYSTEINE7 (226 aa).

Residues 42-116 (IDLSQEPPAE…PSIPETKREK (75 aa)) form a disordered region. The span at 66-76 (RDSRNDTETVK) shows a compositional bias: basic and acidic residues. Over residues 88 to 105 (LKPKPQRKKRSVSNKSKK) the composition is skewed to basic residues.

This sequence belongs to the BBR/BPC family. In terms of tissue distribution, expressed in seedlings, leaves and pistils. Detected in anthers, in pollen grains, in young rosette, in leaf vasculature, in the lateral and primary roots, in embryo sac, and in the whole ovule.

The protein resides in the nucleus. In terms of biological role, transcriptional regulator that specifically binds to GA-rich elements (GAGA-repeats) present in regulatory sequences of genes involved in developmental processes. The polypeptide is Protein BASIC PENTACYSTEINE7 (BPC7) (Arabidopsis thaliana (Mouse-ear cress)).